The primary structure comprises 301 residues: Diaminopimelate epimerase (301 aa).

The substrate site is built by asparagine 15, glutamine 47, and asparagine 67. Cysteine 76 (proton donor) is an active-site residue. Residues 77 to 78, asparagine 163, asparagine 197, and 215 to 216 each bind substrate; these read GN and ER. Cysteine 224 functions as the Proton acceptor in the catalytic mechanism. 225–226 is a binding site for substrate; it reads GS. Residues 280–301 are disordered; sequence SGSLDPSTGLWSRDGTQEAGAR.

Belongs to the diaminopimelate epimerase family. Homodimer.

The protein localises to the cytoplasm. It carries out the reaction (2S,6S)-2,6-diaminopimelate = meso-2,6-diaminopimelate. The protein operates within amino-acid biosynthesis; L-lysine biosynthesis via DAP pathway; DL-2,6-diaminopimelate from LL-2,6-diaminopimelate: step 1/1. In terms of biological role, catalyzes the stereoinversion of LL-2,6-diaminopimelate (L,L-DAP) to meso-diaminopimelate (meso-DAP), a precursor of L-lysine and an essential component of the bacterial peptidoglycan. The polypeptide is Diaminopimelate epimerase (Rhizobium leguminosarum bv. trifolii (strain WSM2304)).